The chain runs to 206 residues: Transmembrane emp24 domain-containing protein bai (206 aa).

Residues 1 to 20 (MARTLLILCTLMAWAWTGEA) form the signal peptide. Residues 21 to 172 (VMFKLTPNTQ…RDTNEKTNSR (152 aa)) are Lumenal-facing. The GOLD domain maps to 30–140 (QKCLKEDIQA…LKPLEVDLKR (111 aa)). A helical transmembrane segment spans residues 173-193 (VLFFSIFSMCCLLGLATWQVL). Over 194–206 (YLRRYFKAKKLIE) the chain is Cytoplasmic.

It belongs to the EMP24/GP25L family.

The protein localises to the membrane. Eca and bai are essential, though not redundant, for dorsoventral patterning of the embryo. Specifically required during early embryogenesis for the activity of maternal tkv, while the zygotic tkv is not affected. This chain is Transmembrane emp24 domain-containing protein bai, found in Drosophila ananassae (Fruit fly).